A 245-amino-acid chain; its full sequence is MKVIIVEDEFLAQQELSWLIKEHSQMEIVGTFDDGLDVLKFLQHNRVDAIFLDINIPSLDGVLLAQNISQFAHKPFIVFITAWKEHAVEAFELEAFDYILKPYQESRITGMLQKLEAAWQQQQTSSTTPAATVTRENDTINLVKDERIIVTPINDIYYAEAHEKMTFVYTRRESYVMPMNITEFFSKLPPSHFFRCHRSFCVNLNKIREIEPWFNNTYILRLKDLDFEVPVSRSKVKEFRQLMHL.

The Response regulatory domain maps to 2–116 (KVIIVEDEFL…RITGMLQKLE (115 aa)). D53 is subject to 4-aspartylphosphate. Positions 140–245 (INLVKDERII…VKEFRQLMHL (106 aa)) constitute an HTH LytTR-type domain.

In terms of processing, phosphorylated by YpdA.

The protein resides in the cytoplasm. Member of the two-component regulatory system YpdA/YpdB. YpdB regulates expression of yhjX by binding to its promoter region. The chain is Transcriptional regulatory protein YpdB (ypdB) from Escherichia coli O6:H1 (strain CFT073 / ATCC 700928 / UPEC).